The sequence spans 257 residues: Coenzyme F420:L-glutamate ligase (257 aa).

Residues 9–12, 38–39, and lysine 43 each bind GTP; these read VPEV and ST. Position 113 (aspartate 113) interacts with a divalent metal cation. A GTP-binding site is contributed by asparagine 116. A divalent metal cation-binding residues include aspartate 154, threonine 155, and glutamate 212. GTP is bound at residue 210–217; sequence TGEGDGGT.

The protein belongs to the CofE family. As to quaternary structure, homodimer. Mg(2+) serves as cofactor. Mn(2+) is required as a cofactor. It depends on K(+) as a cofactor.

The catalysed reaction is oxidized coenzyme F420-0 + GTP + L-glutamate = oxidized coenzyme F420-1 + GDP + phosphate + H(+). The enzyme catalyses oxidized coenzyme F420-1 + GTP + L-glutamate = oxidized coenzyme F420-2 + GDP + phosphate + H(+). The protein operates within cofactor biosynthesis; coenzyme F420 biosynthesis. Catalyzes the GTP-dependent successive addition of two or more gamma-linked L-glutamates to the L-lactyl phosphodiester of 7,8-didemethyl-8-hydroxy-5-deazariboflavin (F420-0) to form coenzyme F420-0-glutamyl-glutamate (F420-2) or polyglutamated F420 derivatives. The sequence is that of Coenzyme F420:L-glutamate ligase from Haloarcula marismortui (strain ATCC 43049 / DSM 3752 / JCM 8966 / VKM B-1809) (Halobacterium marismortui).